A 79-amino-acid chain; its full sequence is ATP synthase subunit 9, mitochondrial (79 aa).

Helical transmembrane passes span 21–41 (SGLIGAGAGVGIVFGCLILAF) and 59–79 (FALTEAIGLLALVMAFLILFI).

This sequence belongs to the ATPase C chain family. As to quaternary structure, F-type ATPases have 2 components, CF(1) - the catalytic core - and CF(0) - the membrane proton channel. CF(1) has five subunits: alpha(3), beta(3), gamma(1), delta(1), epsilon(1). CF(0) has three main subunits: a, b and c.

It localises to the mitochondrion membrane. Its function is as follows. Mitochondrial membrane ATP synthase (F(1)F(0) ATP synthase or Complex V) produces ATP from ADP in the presence of a proton gradient across the membrane which is generated by electron transport complexes of the respiratory chain. F-type ATPases consist of two structural domains, F(1) - containing the extramembraneous catalytic core and F(0) - containing the membrane proton channel, linked together by a central stalk and a peripheral stalk. During catalysis, ATP synthesis in the catalytic domain of F(1) is coupled via a rotary mechanism of the central stalk subunits to proton translocation. Part of the complex F(0) domain. A homomeric c-ring of probably 10 subunits is part of the complex rotary element. This is ATP synthase subunit 9, mitochondrial (ATP9) from Acanthamoeba castellanii (Amoeba).